A 275-amino-acid chain; its full sequence is Dermonecrotic toxin LruSicTox-alphaIV1 (275 aa).

Residue His5 is part of the active site. Positions 25 and 27 each coordinate Mg(2+). His41 serves as the catalytic Nucleophile. Intrachain disulfides connect Cys45/Cys51 and Cys47/Cys192. A Mg(2+)-binding site is contributed by Asp85.

The protein belongs to the arthropod phospholipase D family. Class II subfamily. It depends on Mg(2+) as a cofactor. In terms of tissue distribution, expressed by the venom gland.

The protein localises to the secreted. It catalyses the reaction an N-(acyl)-sphingosylphosphocholine = an N-(acyl)-sphingosyl-1,3-cyclic phosphate + choline. It carries out the reaction an N-(acyl)-sphingosylphosphoethanolamine = an N-(acyl)-sphingosyl-1,3-cyclic phosphate + ethanolamine. The catalysed reaction is a 1-acyl-sn-glycero-3-phosphocholine = a 1-acyl-sn-glycero-2,3-cyclic phosphate + choline. The enzyme catalyses a 1-acyl-sn-glycero-3-phosphoethanolamine = a 1-acyl-sn-glycero-2,3-cyclic phosphate + ethanolamine. Functionally, dermonecrotic toxins cleave the phosphodiester linkage between the phosphate and headgroup of certain phospholipids (sphingolipid and lysolipid substrates), forming an alcohol (often choline) and a cyclic phosphate. This toxin acts on sphingomyelin (SM). It may also act on ceramide phosphoethanolamine (CPE), lysophosphatidylcholine (LPC) and lysophosphatidylethanolamine (LPE), but not on lysophosphatidylserine (LPS), and lysophosphatidylglycerol (LPG). It acts by transphosphatidylation, releasing exclusively cyclic phosphate products as second products. Induces dermonecrosis, hemolysis, increased vascular permeability, edema, inflammatory response, and platelet aggregation. This chain is Dermonecrotic toxin LruSicTox-alphaIV1, found in Loxosceles rufescens (Mediterranean recluse spider).